Reading from the N-terminus, the 264-residue chain is Thymidylate synthase (264 aa).

DUMP is bound at residue R21. H51 serves as a coordination point for (6R)-5,10-methylene-5,6,7,8-tetrahydrofolate. 126–127 (RR) provides a ligand contact to dUMP. Residue C146 is the Nucleophile of the active site. Residues 166-169 (RSAD), N177, and 207-209 (HLY) each bind dUMP. D169 provides a ligand contact to (6R)-5,10-methylene-5,6,7,8-tetrahydrofolate. A263 lines the (6R)-5,10-methylene-5,6,7,8-tetrahydrofolate pocket.

Belongs to the thymidylate synthase family. Bacterial-type ThyA subfamily. Homodimer.

The protein localises to the cytoplasm. The catalysed reaction is dUMP + (6R)-5,10-methylene-5,6,7,8-tetrahydrofolate = 7,8-dihydrofolate + dTMP. Its pathway is pyrimidine metabolism; dTTP biosynthesis. Its function is as follows. Catalyzes the reductive methylation of 2'-deoxyuridine-5'-monophosphate (dUMP) to 2'-deoxythymidine-5'-monophosphate (dTMP) while utilizing 5,10-methylenetetrahydrofolate (mTHF) as the methyl donor and reductant in the reaction, yielding dihydrofolate (DHF) as a by-product. This enzymatic reaction provides an intracellular de novo source of dTMP, an essential precursor for DNA biosynthesis. The protein is Thymidylate synthase of Methylorubrum extorquens (strain CM4 / NCIMB 13688) (Methylobacterium extorquens).